A 309-amino-acid chain; its full sequence is Cyclin-dependent kinase B1-1 (309 aa).

One can recognise a Protein kinase domain in the interval 4–301; that stretch reads YEKLEKVGEG…AKTALDHPYF (298 aa). ATP is bound by residues 10–18 and lysine 33; that span reads VGEGTYGKV. Residue tyrosine 15 is modified to Phosphotyrosine. Aspartate 142 serves as the catalytic Proton acceptor. Phosphothreonine; by CAK is present on threonine 176.

This sequence belongs to the protein kinase superfamily. CMGC Ser/Thr protein kinase family. CDC2/CDKX subfamily. As to quaternary structure, interacts with CKS1. Interacts with CYCU3-1. Interacts with SIM, SMR1 and SMR2. As to expression, highly expressed in guard cells and stomatal precursor cells of cotyledons. Expressed in roots, stems, flowers and siliques.

The protein localises to the nucleus. The catalysed reaction is L-seryl-[protein] + ATP = O-phospho-L-seryl-[protein] + ADP + H(+). The enzyme catalyses L-threonyl-[protein] + ATP = O-phospho-L-threonyl-[protein] + ADP + H(+). It catalyses the reaction [DNA-directed RNA polymerase] + ATP = phospho-[DNA-directed RNA polymerase] + ADP + H(+). With respect to regulation, phosphorylation at Thr-14 or Tyr-15 inactivates the enzyme, while phosphorylation at Thr-176 activates it. In terms of biological role, may control G2/M (mitosis) phase progression. Plays a role in regulating seedling growth in darkness via regulation of hypocotyl cell elongation and cotyledon cell development. Plays a role in stomatal development. Required to suppress endoreduplication. Together with CDKB1-2, promotes both the last division in the stomatal cell lineage as well as the number of stomata. In collaboration with MYB124 and MYB88, restrict the G1/S transition and chloroplast and nuclear number during stomatal formation, and normally maintain fate and developmental progression throughout the stomatal cell lineage. The protein is Cyclin-dependent kinase B1-1 (CDKB1-1) of Arabidopsis thaliana (Mouse-ear cress).